Here is a 404-residue protein sequence, read N- to C-terminus: Serine/threonine transporter SstT (404 aa).

Helical transmembrane passes span 17 to 37 (IGIGVVIGVMLGILAPDLTGF), 39 to 59 (ILGKLFVGGLKAIAPLLVFAL), 75 to 95 (MTLIIVLYLFGTFASALVAVL), 138 to 158 (ALATANYIGVLSWAIIFGLAL), 179 to 199 (IVVWIINLAPIGIMSLVFTTI), 212 to 232 (FLILVLVGTMVFVALVVNPLI), 287 to 307 (IPLGATINMGGAAITINVLTL), and 313 to 333 (FGIPIDFLTALLLSVVAAVSA).

The protein belongs to the dicarboxylate/amino acid:cation symporter (DAACS) (TC 2.A.23) family.

The protein localises to the cell membrane. It catalyses the reaction L-serine(in) + Na(+)(in) = L-serine(out) + Na(+)(out). It carries out the reaction L-threonine(in) + Na(+)(in) = L-threonine(out) + Na(+)(out). Involved in the import of serine and threonine into the cell, with the concomitant import of sodium (symport system). In Streptococcus pyogenes serotype M2 (strain MGAS10270), this protein is Serine/threonine transporter SstT.